A 152-amino-acid polypeptide reads, in one-letter code: Peptide deformylase (152 aa).

Fe cation contacts are provided by Cys-91 and His-133. Glu-134 is a catalytic residue. Residue His-137 coordinates Fe cation.

Belongs to the polypeptide deformylase family. The cofactor is Fe(2+).

It carries out the reaction N-terminal N-formyl-L-methionyl-[peptide] + H2O = N-terminal L-methionyl-[peptide] + formate. In terms of biological role, removes the formyl group from the N-terminal Met of newly synthesized proteins. Requires at least a dipeptide for an efficient rate of reaction. N-terminal L-methionine is a prerequisite for activity but the enzyme has broad specificity at other positions. This is Peptide deformylase from Wigglesworthia glossinidia brevipalpis.